The sequence spans 37 residues: Esculentin-2SE (37 aa).

Residues Cys31 and Cys37 are joined by a disulfide bond.

Expressed by the skin glands.

The protein localises to the secreted. Its function is as follows. Mast cell degranulating peptide. Causes histamine release from rat peritoneal mast cells in vitro. Has antibacterial activity against the Gram-negative bacterium E.coli K12 and Gram-positive bacterium M.luteus NCT C2665. The polypeptide is Esculentin-2SE (Lithobates sevosus (Dusky gopher frog)).